A 548-amino-acid polypeptide reads, in one-letter code: Guanine nucleotide-binding protein-like 3 (548 aa).

Residues 1 to 45 are compositionally biased toward basic residues; sequence MKRPKLKKGSKRLSCHKRYKIQKKVREHNRKARKEAKKSGTRKQK. A disordered region spans residues 1–118; sequence MKRPKLKKGS…KKNKGTKAAE (118 aa). A coiled-coil region spans residues 58 to 114; the sequence is AEILQEAQRRRQQEEELKQNRKLERQKEVAKRRKLDEKKKKNSEKREKRDNKKNKGT. Over residues 64–107 the composition is skewed to basic and acidic residues; that stretch reads AQRRRQQEEELKQNRKLERQKEVAKRRKLDEKKKKNSEKREKRD. A CP-type G domain is found at 125–305; sequence CRHVNKVLEQ…MLDSPALVVS (181 aa). Residues 172 to 175, 256 to 263, and 298 to 301 contribute to the GTP site; these read NKAD, ANVGKSSV, and DSPA. Positions 459-548 are disordered; the sequence is RQLVEPEPIE…DAYDFNTDFV (90 aa). Acidic residues predominate over residues 465 to 497; sequence EPIEEELEANDGEEDVEEEHEGSEEEEDEEVEQ. Basic and acidic residues predominate over residues 501-523; sequence SAKEQEVVSAKEQEVVSAKEQDS. Positions 524–534 are enriched in polar residues; that stretch reads KSAGPSVSFDQ.

Belongs to the TRAFAC class YlqF/YawG GTPase family.

Its subcellular location is the nucleus. The protein resides in the nucleolus. Functionally, may play a role in regulating cellular proliferation. The polypeptide is Guanine nucleotide-binding protein-like 3 (gnl3) (Xenopus tropicalis (Western clawed frog)).